Reading from the N-terminus, the 92-residue chain is Small ribosomal subunit protein uS19 (92 aa).

It belongs to the universal ribosomal protein uS19 family.

Functionally, protein S19 forms a complex with S13 that binds strongly to the 16S ribosomal RNA. The polypeptide is Small ribosomal subunit protein uS19 (Rickettsia africae (strain ESF-5)).